The sequence spans 379 residues: MTSVAKVYYSQTTQTESRPLVAPGIRRRRVLTKDGRSNVRMEHIADKRFLYLKDLWTTFIDMQWRYKLLLFSATFAGTWFLFGVVWYLVAVAHGDLLELGPPANHTPCVVQVHTLTGAFLFSLESQTTIGYGFRYISEECPLAIVLLIAQLVLTTILEIFITGTFLAKIARPKKRAETIRFSQHAVVASHNGKPCLMIRVANMRKSLLIGCQVTGKLLQTHQTKEGENIRLNQVNVTFQVDTASDSPFLILPLTFYHVVDETSPLKDLPLRSGEGDFELVLILSGTVESTSATCQVRTSYLPEEILWGYEFTPAISLSASGKYIADFSLFDQVVKVASPSGLRDSTVRYGDPEKLKLEESLREQAEKEGSALSVRISNV.

The Cytoplasmic portion of the chain corresponds to 1 to 61; sequence MTSVAKVYYS…LKDLWTTFID (61 aa). Arg-36 is a binding site for 1,2-dioctanoyl-sn-glycero-3-phospho-(1D-myo-inositol-4,5-bisphosphate). Residues 62-88 form a helical membrane-spanning segment; it reads MQWRYKLLLFSATFAGTWFLFGVVWYL. Topologically, residues 89 to 114 are extracellular; the sequence is VAVAHGDLLELGPPANHTPCVVQVHT. A disulfide bridge connects residues Cys-108 and Cys-140. The segment at residues 115–131 is an intramembrane region (discontinuously helical; Pore-forming); the sequence is LTGAFLFSLESQTTIGY. A Selectivity filter motif is present at residues 128-133; that stretch reads TIGYGF. Residues 132-140 lie on the Extracellular side of the membrane; sequence GFRYISEEC. A helical transmembrane segment spans residues 141-166; the sequence is PLAIVLLIAQLVLTTILEIFITGTFL. At 167–379 the chain is on the cytoplasmic side; it reads AKIARPKKRA…SALSVRISNV (213 aa). Lys-168, Arg-171, and Lys-173 together coordinate 1,2-dioctanoyl-sn-glycero-3-phospho-(1D-myo-inositol-4,5-bisphosphate). 210–217 lines the ATP pocket; that stretch reads GCQVTGKL.

The protein belongs to the inward rectifier-type potassium channel (TC 1.A.2.1) family. KCNJ10 subfamily. In terms of assembly, homotetramer. In kidney cells, it forms heteromeric channels with Kir5.1/KCNJ16; this interaction is required for KCNJ16 localization to the basolateral membrane. Interacts with MAGI1, alone and possibly as a heteromer with KCNJ16; this interaction may facilitate KCNJ10/KCNJ16 potassium channel expression at the basolateral membrane in kidney cells. Interacts with PATJ. As to expression, widely expressed in adult brain, including in the neocortex, the stratum pyrimadale of the hippocampus and the piriform cortex. Expressed by cultured astrocytes and also by cocultured cortical neurons (at protein level). In the distal segment of the nephron, expressed in the distal convoluted tubule, the connecting tubule, and the early cortical collecting duct.

It is found in the membrane. Its subcellular location is the basolateral cell membrane. It carries out the reaction K(+)(in) = K(+)(out). Channel activity is strongly regulated by variations of cytosolic pH; channels are activated by alkaline and inhibited by acidic pH values. Activated by phosphatidylinositol 4,5 biphosphate (PtdIns(4,5)P2). Inhibited by Ba(2+) and Cs(+). Its function is as follows. May be responsible for potassium buffering action of glial cells in the brain. Inward rectifier potassium channels are characterized by a greater tendency to allow potassium to flow into the cell rather than out of it. Their voltage dependence is regulated by the concentration of extracellular potassium; as external potassium is raised, the voltage range of the channel opening shifts to more positive voltages. The inward rectification is mainly due to the blockage of outward current by internal magnesium. Can be blocked by extracellular barium and cesium. In the kidney, together with KCNJ16, mediates basolateral K(+) recycling in distal tubules; this process is critical for Na(+) reabsorption at the tubules. This chain is ATP-sensitive inward rectifier potassium channel 10, found in Mus musculus (Mouse).